The primary structure comprises 354 residues: Mycothiol acetyltransferase (354 aa).

The segment covering M1–T18 has biased composition (polar residues). Positions M1–Y21 are disordered. N-acetyltransferase domains follow at residues Y21–E176 and L191–A354. A 1D-myo-inositol 2-(L-cysteinylamino)-2-deoxy-alpha-D-glucopyranoside-binding site is contributed by E52. A101–V103 serves as a coordination point for acetyl-CoA. The 1D-myo-inositol 2-(L-cysteinylamino)-2-deoxy-alpha-D-glucopyranoside site is built by E217, K259, and E274. Acetyl-CoA-binding positions include V278 to V280 and Q285 to R291. Residue Y318 coordinates 1D-myo-inositol 2-(L-cysteinylamino)-2-deoxy-alpha-D-glucopyranoside.

It belongs to the acetyltransferase family. MshD subfamily. In terms of assembly, monomer.

It catalyses the reaction 1D-myo-inositol 2-(L-cysteinylamino)-2-deoxy-alpha-D-glucopyranoside + acetyl-CoA = mycothiol + CoA + H(+). Catalyzes the transfer of acetyl from acetyl-CoA to desacetylmycothiol (Cys-GlcN-Ins) to form mycothiol. The chain is Mycothiol acetyltransferase from Rothia mucilaginosa (strain DY-18) (Stomatococcus mucilaginosus).